Here is a 551-residue protein sequence, read N- to C-terminus: Cation/acetate symporter ActP (551 aa).

14 consecutive transmembrane segments (helical) span residues 5–25, 34–54, 77–97, 104–124, 150–170, 184–204, 207–227, 263–283, 304–324, 356–376, 406–426, 430–450, 469–489, and 498–518; these read HWSA…ALTG, IQAI…TYWA, GLAI…SALV, GLIY…LIAE, LSAC…MVGA, VAVV…GMLA, WVQI…AIMV, ISAL…PHIL, GFIG…ILLV, FFLG…VAGL, VSKI…ILFE, IAFM…PIII, LGLS…VTIL, and YEYP…FFSI.

Belongs to the sodium:solute symporter (SSF) (TC 2.A.21) family.

It is found in the cell inner membrane. Transports acetate. The polypeptide is Cation/acetate symporter ActP (Yersinia pseudotuberculosis serotype IB (strain PB1/+)).